Consider the following 621-residue polypeptide: Myosin-binding protein C, slow-type (621 aa).

3 consecutive Ig-like C2-type domains span residues 1-53 (EEIV…VDLR), 54-142 (PLKI…HVID), and 144-241 (PKII…LWIS). Thr28 bears the Phosphothreonine mark. At Ser233 the chain carries Phosphoserine. 3 Fibronectin type-III domains span residues 244–343 (LRLA…TSPP), 344–459 (TLLA…IEPP), and 556–621 (PPQA…VIGN). Position 420 is a phosphothreonine (Thr420). Phosphotyrosine is present on Tyr445. The region spanning 459–553 (PKIRIPRHLK…ASIDIQIVDR (95 aa)) is the Ig-like C2-type 4 domain.

It belongs to the immunoglobulin superfamily. MyBP family. Interacts with USP25 (isoform USP25m only); the interaction prevents proteasomal degradation of MYBPC1.

Functionally, thick filament-associated protein located in the crossbridge region of vertebrate striated muscle a bands. Slow skeletal protein that binds to both myosin and actin. In vitro, binds to native thin filaments and modifies the activity of actin-activated myosin ATPase. May modulate muscle contraction or may play a more structural role. The protein is Myosin-binding protein C, slow-type (Mybpc1) of Rattus norvegicus (Rat).